The primary structure comprises 1462 residues: DNA topoisomerase 2 (1462 aa).

Residues asparagine 79, asparagine 108, 136–138 (SSN), and 149–156 (GRNGYGAK) contribute to the ATP site. Positions 332-334 (NKK) are interaction with DNA. 365–367 (QTK) provides a ligand contact to ATP. Positions 442 to 556 (CTLILTEGDS…SLLKVPSFLV (115 aa)) constitute a Toprim domain. The Mg(2+) site is built by glutamate 448, aspartate 525, and aspartate 527. Residues 671–1131 (KDFVNKELIL…PTTSLWLKDL (461 aa)) enclose the Topo IIA-type catalytic domain. Tyrosine 761 (O-(5'-phospho-DNA)-tyrosine intermediate) is an active-site residue. Positions 947 to 956 (KLTSTISTSN) are interaction with DNA. 2 disordered regions span residues 1040–1077 (PMPR…SVSV) and 1147–1462 (EDDR…EDDD). The segment covering 1056-1068 (NDDDSEEQEDAEP) has biased composition (acidic residues). Positions 1167-1181 (PAKKPPQPRKNTKKA) are enriched in basic residues. The segment covering 1198 to 1207 (AVEAAKPAEV) has biased composition (low complexity). A compositionally biased stretch (polar residues) spans 1240–1250 (IESSGEKSQAM). Residues 1260-1275 (AGKKQNNKRGGAKKKS) show a composition bias toward basic residues. The segment covering 1282–1300 (SDSDNEVNDVDDDDDDFEE) has biased composition (acidic residues). Low complexity-rich tracts occupy residues 1314-1334 (KPAA…APAA) and 1419-1430 (APQPARARPQRA). The span at 1442 to 1462 (SESEEDSDEDAELSDFEEDDD) shows a compositional bias: acidic residues.

It belongs to the type II topoisomerase family. As to quaternary structure, homodimer. The cofactor is Mg(2+). Mn(2+) serves as cofactor. It depends on Ca(2+) as a cofactor. In terms of tissue distribution, abundant in proliferative tissues.

The enzyme catalyses ATP-dependent breakage, passage and rejoining of double-stranded DNA.. In terms of biological role, control of topological states of DNA by transient breakage and subsequent rejoining of DNA strands. Topoisomerase II makes double-strand breaks. This Pisum sativum (Garden pea) protein is DNA topoisomerase 2 (TOP2).